The sequence spans 158 residues: pH 6 antigen (158 aa).

The N-terminal stretch at M1–A26 is a signal peptide.

Forms a homomer composed of subunits assembled in a large structure.

It is found in the fimbrium. In terms of biological role, fibrillar structure, part of fimbriae, necessary for full virulence. The sequence is that of pH 6 antigen (psaA) from Yersinia pestis.